The sequence spans 399 residues: S-adenosylmethionine synthase (399 aa).

ATP is bound at residue 136-141 (GTGSAD).

The protein belongs to the AdoMet synthase 2 family. Mg(2+) serves as cofactor.

It carries out the reaction L-methionine + ATP + H2O = S-adenosyl-L-methionine + phosphate + diphosphate. Its pathway is amino-acid biosynthesis; S-adenosyl-L-methionine biosynthesis; S-adenosyl-L-methionine from L-methionine: step 1/1. In terms of biological role, catalyzes the formation of S-adenosylmethionine from methionine and ATP. The chain is S-adenosylmethionine synthase from Methanothrix thermoacetophila (strain DSM 6194 / JCM 14653 / NBRC 101360 / PT) (Methanosaeta thermophila).